The sequence spans 199 residues: Probable GTP-binding protein EngB (199 aa).

Residues 22-196 (NFSEVAFLGR…EDVIINQTLG (175 aa)) form the EngB-type G domain. GTP contacts are provided by residues 30–37 (GRSNVGKS), 57–61 (GKTQL), 82–85 (DLPG), 152–155 (TKCD), and 175–177 (VSN). Residues serine 37 and threonine 59 each coordinate Mg(2+).

The protein belongs to the TRAFAC class TrmE-Era-EngA-EngB-Septin-like GTPase superfamily. EngB GTPase family. The cofactor is Mg(2+).

Necessary for normal cell division and for the maintenance of normal septation. The sequence is that of Probable GTP-binding protein EngB from Campylobacter jejuni subsp. doylei (strain ATCC BAA-1458 / RM4099 / 269.97).